A 169-amino-acid chain; its full sequence is Shikimate kinase (169 aa).

13–18 (GAGKST) is a binding site for ATP. S17 is a binding site for Mg(2+). Residues D35, R59, and G80 each contribute to the substrate site. R117 is a binding site for ATP. Position 136 (R136) interacts with substrate. R153 is an ATP binding site.

Belongs to the shikimate kinase family. As to quaternary structure, monomer. Requires Mg(2+) as cofactor.

The protein resides in the cytoplasm. The enzyme catalyses shikimate + ATP = 3-phosphoshikimate + ADP + H(+). The protein operates within metabolic intermediate biosynthesis; chorismate biosynthesis; chorismate from D-erythrose 4-phosphate and phosphoenolpyruvate: step 5/7. Functionally, catalyzes the specific phosphorylation of the 3-hydroxyl group of shikimic acid using ATP as a cosubstrate. The chain is Shikimate kinase from Corynebacterium glutamicum (strain ATCC 13032 / DSM 20300 / JCM 1318 / BCRC 11384 / CCUG 27702 / LMG 3730 / NBRC 12168 / NCIMB 10025 / NRRL B-2784 / 534).